The following is a 605-amino-acid chain: uncharacterized protein (605 aa).

The chain crosses the membrane as a helical span at residues I56 to F78.

It localises to the cell membrane. This is an uncharacterized protein from Bacillus subtilis (strain 168).